Consider the following 187-residue polypeptide: Glutathione peroxidase 7 (187 aa).

An N-terminal signal peptide occupies residues 1–19 (MVAATVAAAWLLLWAAACA). Cys57 is a catalytic residue.

The protein belongs to the glutathione peroxidase family. As to expression, expressed in esophageal epithelial cells; expression is up-regulated after exposure to acidic bile acids.

It localises to the secreted. It catalyses the reaction 2 glutathione + H2O2 = glutathione disulfide + 2 H2O. It protects esophageal epithelia from hydrogen peroxide-induced oxidative stress. It suppresses acidic bile acid-induced reactive oxygen species (ROS) and protects against oxidative DNA damage and double-strand breaks. The sequence is that of Glutathione peroxidase 7 (GPX7) from Homo sapiens (Human).